A 220-amino-acid polypeptide reads, in one-letter code: Protein US2 homolog (220 aa).

It belongs to the herpesviridae US2 family.

This is Protein US2 homolog from Bovine herpesvirus 1.2 (strain ST) (BoHV-1).